Reading from the N-terminus, the 123-residue chain is Large ribosomal subunit protein bL17 (123 aa).

The protein belongs to the bacterial ribosomal protein bL17 family. As to quaternary structure, part of the 50S ribosomal subunit. Contacts protein L32.

In Exiguobacterium sibiricum (strain DSM 17290 / CCUG 55495 / CIP 109462 / JCM 13490 / 255-15), this protein is Large ribosomal subunit protein bL17.